The sequence spans 379 residues: Guanine nucleotide-binding protein G(s) subunit alpha (379 aa).

Positions 1–25 (MGCLGNSKTEDQRNEEKVQRETNKK) are disordered. Residue G2 is the site of N-palmitoyl glycine attachment. C3 carries S-palmitoyl cysteine lipidation. Basic and acidic residues predominate over residues 8–25 (KTEDQRNEEKVQRETNKK). In terms of domain architecture, G-alpha spans 39 to 379 (ATHRLLLLGA…RMHLRQYELL (341 aa)). The segment at 42–55 (RLLLLGAGESGKSS) is G1 motif. GTP-binding positions include 47–55 (GAGESGKSS), 182–189 (LLRCRVLT), 208–212 (DVGGQ), 277–280 (NKQD), and A351. Residues S54 and T189 each coordinate Mg(2+). Positions 181 to 189 (DLLRCRVLT) are G2 motif. Residues 204-213 (FHMFDVGGQR) form a G3 motif region. The tract at residues 273–280 (ILFLNKQD) is G4 motif. Residues 349–354 (TCAVDT) are G5 motif.

Belongs to the G-alpha family. G(s) subfamily. In terms of assembly, heterotrimeric G proteins are composed of 3 units; alpha, beta and gamma. The alpha chain contains the guanine nucleotide binding site.

It is found in the cell membrane. Functionally, guanine nucleotide-binding proteins (G proteins) function as transducers in numerous signaling pathways controlled by G protein-coupled receptors (GPCRs). Signaling involves the activation of adenylyl cyclases, resulting in increased levels of the signaling molecule cAMP. GNAS functions downstream of several GPCRs, including beta-adrenergic receptors. Stimulates the Ras signaling pathway. In Xenopus laevis (African clawed frog), this protein is Guanine nucleotide-binding protein G(s) subunit alpha (gnas).